The chain runs to 508 residues: Probable metalloreductase AIM14 (508 aa).

A run of 8 helical transmembrane segments spans residues 18-38 (LPYG…LIVM), 70-90 (PLLL…VAYI), 100-120 (LSYV…NPIL), 137-157 (FVTV…SLDP), 168-188 (LFNF…FASV), 198-218 (SFYV…PIHA), 222-242 (VTVP…ISYI), and 347-367 (VAIV…KYLQ). Positions 97 to 214 (LGRLSYVLVI…LGQWAMVFLV (118 aa)) constitute a Ferric oxidoreductase domain. The region spanning 241–361 (YIYYSTTVNV…GGSGISFGLS (121 aa)) is the FAD-binding FR-type domain.

The protein belongs to the ferric reductase (FRE) family. AIM14 subfamily.

It is found in the membrane. Functionally, probable cell surface metalloreductase. May be involved in iron or copper homeostasis. The chain is Probable metalloreductase AIM14 (AIM14) from Kluyveromyces lactis (strain ATCC 8585 / CBS 2359 / DSM 70799 / NBRC 1267 / NRRL Y-1140 / WM37) (Yeast).